The chain runs to 370 residues: MWHSPFSTAFTLFLGFFTLTLALPTNSLATTGHFTIEQRLINTIKSDWPPKELWRGLRKHHRPLPPAVSRISRHGGSFANGTVKVTPDEYDTEFVNEITIGNDTLFVDIDTGSSDFWVFSSQLPEQSQRNHRIYHPEKTGIKLPKQIWETSYGDGTGAAGNVFLDKVNLAGLEVSSQVTPKKQKTWFGNIMERLEKPIFTACLKHKAPGFYDFGFIDKTKHIGNPSYLPVDNSRGWWETTFNGFSTGPSDNSTYRFRAVVDTGTTFMLLPREITEQYYSSITGSAFDRENGGWTFPCNATLPEFAIHVNDYKAIVPGEHINWAQIPGTNTCFGGIQPVDRSPAVLGGSFLKSQFVIFDHDGPKMGFAAQR.

Residues 1–21 (MWHSPFSTAFTLFLGFFTLTL) form the signal peptide. Residues asparagine 80 and asparagine 102 are each glycosylated (N-linked (GlcNAc...) asparagine). Residues 94 to 367 (FVNEITIGND…DHDGPKMGFA (274 aa)) form the Peptidase A1 domain. Aspartate 110 is an active-site residue. Asparagine 251 carries N-linked (GlcNAc...) asparagine glycosylation. Aspartate 261 is a catalytic residue. N-linked (GlcNAc...) asparagine glycosylation occurs at asparagine 298.

The protein belongs to the peptidase A1 family.

It is found in the secreted. Probable aspartic-type endopeptidase which contributes to virulence. This Arthroderma benhamiae (strain ATCC MYA-4681 / CBS 112371) (Trichophyton mentagrophytes) protein is Probable aspartic-type endopeptidase ARB_04018.